A 738-amino-acid polypeptide reads, in one-letter code: Eukaryotic translation initiation factor 3 subunit B (738 aa).

The interval 1–120 (MCGCVGVISN…LFIQFKTAQM (120 aa)) is sufficient for interaction with HCR1 and TIF32. The tract at residues 1 to 245 (MCGCVGVISN…GIQSWGGAQF (245 aa)) is sufficient for interaction with PIC8. The region spanning 59-146 (NFVVVDGAPI…HRLLVNKLSD (88 aa)) is the RRM domain. 4 WD repeats span residues 211-250 (PRKG…SISK), 322-360 (QKEM…LLDK), 363-406 (VKID…QTAR), and 537-579 (VVDK…ENVR).

It belongs to the eIF-3 subunit B family. As to quaternary structure, component of the eukaryotic translation initiation factor 3 (eIF-3) complex.

Its subcellular location is the cytoplasm. In terms of biological role, RNA-binding component of the eukaryotic translation initiation factor 3 (eIF-3) complex, which is involved in protein synthesis of a specialized repertoire of mRNAs and, together with other initiation factors, stimulates binding of mRNA and methionyl-tRNAi to the 40S ribosome. The eIF-3 complex specifically targets and initiates translation of a subset of mRNAs involved in cell proliferation. This chain is Eukaryotic translation initiation factor 3 subunit B, found in Meyerozyma guilliermondii (strain ATCC 6260 / CBS 566 / DSM 6381 / JCM 1539 / NBRC 10279 / NRRL Y-324) (Yeast).